A 194-amino-acid polypeptide reads, in one-letter code: Large ribosomal subunit protein bL25 (194 aa).

The protein belongs to the bacterial ribosomal protein bL25 family. CTC subfamily. Part of the 50S ribosomal subunit; part of the 5S rRNA/L5/L18/L25 subcomplex. Contacts the 5S rRNA. Binds to the 5S rRNA independently of L5 and L18.

In terms of biological role, this is one of the proteins that binds to the 5S RNA in the ribosome where it forms part of the central protuberance. This chain is Large ribosomal subunit protein bL25, found in Thermobifida fusca (strain YX).